A 354-amino-acid chain; its full sequence is Alkanal monooxygenase alpha chain (354 aa).

This sequence belongs to the bacterial luciferase oxidoreductase family. In terms of assembly, heterodimer of an alpha and a beta chain.

It carries out the reaction a long-chain fatty aldehyde + FMNH2 + O2 = a long-chain fatty acid + hnu + FMN + H2O + 2 H(+). Its function is as follows. Light-emitting reaction in luminous bacteria. In Aliivibrio fischeri (Vibrio fischeri), this protein is Alkanal monooxygenase alpha chain (luxA).